A 210-amino-acid chain; its full sequence is Thiamine-phosphate synthase (210 aa).

Residues 39 to 43 (QLREK) and Asn-71 contribute to the 4-amino-2-methyl-5-(diphosphooxymethyl)pyrimidine site. Mg(2+) is bound by residues Asp-72 and Asp-91. Ser-110 contacts 4-amino-2-methyl-5-(diphosphooxymethyl)pyrimidine. 134-136 (TPT) lines the 2-[(2R,5Z)-2-carboxy-4-methylthiazol-5(2H)-ylidene]ethyl phosphate pocket. Lys-137 contributes to the 4-amino-2-methyl-5-(diphosphooxymethyl)pyrimidine binding site. Gly-163 serves as a coordination point for 2-[(2R,5Z)-2-carboxy-4-methylthiazol-5(2H)-ylidene]ethyl phosphate.

It belongs to the thiamine-phosphate synthase family. The cofactor is Mg(2+).

The catalysed reaction is 2-[(2R,5Z)-2-carboxy-4-methylthiazol-5(2H)-ylidene]ethyl phosphate + 4-amino-2-methyl-5-(diphosphooxymethyl)pyrimidine + 2 H(+) = thiamine phosphate + CO2 + diphosphate. The enzyme catalyses 2-(2-carboxy-4-methylthiazol-5-yl)ethyl phosphate + 4-amino-2-methyl-5-(diphosphooxymethyl)pyrimidine + 2 H(+) = thiamine phosphate + CO2 + diphosphate. It catalyses the reaction 4-methyl-5-(2-phosphooxyethyl)-thiazole + 4-amino-2-methyl-5-(diphosphooxymethyl)pyrimidine + H(+) = thiamine phosphate + diphosphate. The protein operates within cofactor biosynthesis; thiamine diphosphate biosynthesis; thiamine phosphate from 4-amino-2-methyl-5-diphosphomethylpyrimidine and 4-methyl-5-(2-phosphoethyl)-thiazole: step 1/1. Its function is as follows. Condenses 4-methyl-5-(beta-hydroxyethyl)thiazole monophosphate (THZ-P) and 2-methyl-4-amino-5-hydroxymethyl pyrimidine pyrophosphate (HMP-PP) to form thiamine monophosphate (TMP). In Campylobacter jejuni (strain RM1221), this protein is Thiamine-phosphate synthase.